Reading from the N-terminus, the 65-residue chain is Metallothionein-3 (65 aa).

Met-1 bears the N-acetylmethionine mark. The tract at residues 1 to 30 (MDPEACPCPTGGSCTCSDSCKCEGCTCASS) is beta. The a divalent metal cation site is built by Cys-6, Cys-8, Cys-14, Cys-16, Cys-20, Cys-22, Cys-25, and Cys-27. The tract at residues 31–65 (KKSCCPAECEKCAKDCVCKGGEGAEAEEKKCGCCQ) is alpha. Phosphoserine is present on Ser-33. Residues Cys-34, Cys-35, Cys-39, Cys-42, Cys-46, Cys-48, Cys-61, Cys-63, and Cys-64 each contribute to the a divalent metal cation site.

This sequence belongs to the metallothionein superfamily. Type 1 family.

Its function is as follows. Binds heavy metals. Contains five zinc and one copper atoms per polypeptide chain and only a negligible amount of cadmium. The sequence is that of Metallothionein-3 (MT3) from Ovis aries (Sheep).